The sequence spans 330 residues: G-protein coupled receptor 74 (330 aa).

7 helical membrane-spanning segments follow: residues 50–70 (LIVVPCLVILLVFCLIGNLWL), 85–105 (FILILMCLNSFWGCLCMIFSI), 121–141 (MVVFWVYVFFDMFLICWLCFD), 160–180 (WVFCTVALIILAFILSMQKAL), 210–230 (VAVSVNVLGFLLPLLFLCIFY), 252–272 (MLLFVFMFLLTWGPYYILSFI), and 295–315 (LPLLGLWGMAHGGLQVFIYIL). C117 and C195 form a disulfide bridge.

Belongs to the G-protein coupled receptor 1 family.

Its subcellular location is the host membrane. This Equus caballus (Horse) protein is G-protein coupled receptor 74 (74).